Here is a 347-residue protein sequence, read N- to C-terminus: DNA-directed RNA polymerase subunit alpha (347 aa).

Positions 1–226 (MLISQRPTLS…ELFGLARELN (226 aa)) are alpha N-terminal domain (alpha-NTD). The interval 241-347 (ADHIASFALP…DQDYAETEQL (107 aa)) is alpha C-terminal domain (alpha-CTD).

It belongs to the RNA polymerase alpha chain family. As to quaternary structure, homodimer. The RNAP catalytic core consists of 2 alpha, 1 beta, 1 beta' and 1 omega subunit. When a sigma factor is associated with the core the holoenzyme is formed, which can initiate transcription.

The enzyme catalyses RNA(n) + a ribonucleoside 5'-triphosphate = RNA(n+1) + diphosphate. In terms of biological role, DNA-dependent RNA polymerase catalyzes the transcription of DNA into RNA using the four ribonucleoside triphosphates as substrates. This is DNA-directed RNA polymerase subunit alpha from Mycobacterium ulcerans (strain Agy99).